An 85-amino-acid polypeptide reads, in one-letter code: Small ribosomal subunit protein eS21 (85 aa).

This sequence belongs to the eukaryotic ribosomal protein eS21 family. As to quaternary structure, component of the 40S small ribosomal subunit.

It is found in the cytoplasm. It localises to the cytosol. The protein resides in the rough endoplasmic reticulum. This chain is Small ribosomal subunit protein eS21 (RPS21), found in Branchiostoma belcheri (Amphioxus).